The chain runs to 211 residues: MTSQRTRERLIQRLCEEGISNQRVLDVIRKTPRHLFVDEALAHRAYEDTALPIGHNQTISQPYMVARMSELLLAAGPLDKVMEIGTGSGYQTAVLAQLVERVFSVERIKGLQDRAKERLVELNLRNVVFRWGDGWEGWPALAPYNGIIVTAVATDVPQALLDQLAPGGRLVIPVGSGEVQQLMLIIREENGFSRHVLGAVRFVPLLNGPIA.

The active site involves serine 60.

Belongs to the methyltransferase superfamily. L-isoaspartyl/D-aspartyl protein methyltransferase family.

It is found in the cytoplasm. It catalyses the reaction [protein]-L-isoaspartate + S-adenosyl-L-methionine = [protein]-L-isoaspartate alpha-methyl ester + S-adenosyl-L-homocysteine. Its function is as follows. Catalyzes the methyl esterification of L-isoaspartyl residues in peptides and proteins that result from spontaneous decomposition of normal L-aspartyl and L-asparaginyl residues. It plays a role in the repair and/or degradation of damaged proteins. This Pseudomonas syringae pv. syringae (strain B728a) protein is Protein-L-isoaspartate O-methyltransferase.